The sequence spans 306 residues: Stimulator of interferon genes protein 5 (306 aa).

Residues 1-50 (MMSNDSQSEKRTAKWTGSGTPIAEGEESSSPSAHQTRQKATAADDDDDQQ) are disordered. 2',3'-cGAMP contacts are provided by Tyr-119, Arg-180, and Arg-186.

It belongs to the STING family.

Facilitator of innate immune signaling that acts as a sensor of second messenger signals produced by cyclic GMP-AMP synthase-like receptors (cGLRs) and promotes the production of type I interferon. Innate immune response is triggered in response to nucleotides from viruses and bacteria delivered to the cytoplasm. Acts by binding cyclic dinucleotides: recognizes and binds 2'-3' linked cGAMP (2'-3'-cGAMP), a second messengers produced by cGLRs in response to nucleotides in the cytosol, such as double-stranded RNA (dsRNA). Upon binding to 2'-3'-cGAMP, oligomerizes and promotes the recruitment and subsequent activation of the transcription factor IRF3 to induce expression of type I interferon. The sequence is that of Stimulator of interferon genes protein 5 from Stylophora pistillata (Smooth cauliflower coral).